The chain runs to 348 residues: Phenylalanine--tRNA ligase alpha subunit (348 aa).

E259 contacts Mg(2+).

It belongs to the class-II aminoacyl-tRNA synthetase family. Phe-tRNA synthetase alpha subunit type 1 subfamily. Tetramer of two alpha and two beta subunits. Mg(2+) is required as a cofactor.

It localises to the cytoplasm. It catalyses the reaction tRNA(Phe) + L-phenylalanine + ATP = L-phenylalanyl-tRNA(Phe) + AMP + diphosphate + H(+). The chain is Phenylalanine--tRNA ligase alpha subunit from Limosilactobacillus reuteri (strain DSM 20016) (Lactobacillus reuteri).